Here is a 134-residue protein sequence, read N- to C-terminus: uncharacterized protein (134 aa).

Residues 1-26 form the signal peptide; sequence MRLYKAMALCLPLVVICTSEVSQSTA. Positions 77–98 are disordered; the sequence is GEKNEEVAGPVDGEGSEEEAFD.

This is an uncharacterized protein from Encephalitozoon cuniculi (strain GB-M1) (Microsporidian parasite).